We begin with the raw amino-acid sequence, 410 residues long: Diguanylate cyclase DgcM (410 aa).

2 consecutive PAS domains span residues 3–70 and 129–198; these read THNF…NQHD and GFYA…HLPG. The PAC domain occupies 199 to 251; it reads GHKPLNFVHKLADGSTRHVQTYAGPIEIYGDKLMLCIVHDITEQKRLEEQLEH. The 128-residue stretch at 283-410 folds into the GGDEF domain; the sequence is QDYSLLLIDT…NDGRNRVLAA (128 aa). Position 291 (aspartate 291) interacts with Mg(2+). Positions 299, 304, and 308 each coordinate substrate. Residue glutamate 334 participates in Mg(2+) binding. Glutamate 334 functions as the Proton acceptor in the catalytic mechanism.

Forms homodimers and homotetramers. Interacts with PdeR and MlrA. The cofactor is Mg(2+).

The catalysed reaction is 2 GTP = 3',3'-c-di-GMP + 2 diphosphate. Its pathway is purine metabolism; 3',5'-cyclic di-GMP biosynthesis. Its activity is regulated as follows. Activity is inhibited by the phosphodiesterase PdeR. Inhibition is relieved by high cellular c-di-GMP levels. In terms of biological role, part of a signaling cascade that regulates curli biosynthesis. The cascade is composed of two cyclic-di-GMP (c-di-GMP) control modules, in which c-di-GMP controlled by the DgcE/PdeH pair (module I) regulates the activity of the DgcM/PdeR pair (module II), which in turn regulates activity of the transcription factor MlrA and expression of the master biofilm regulator csgD. DgcM stimulates activity of MlrA by direct interaction, leading to the transcription of csgD. It also catalyzes the synthesis of c-di-GMP via the condensation of 2 GTP molecules, which contributes to the c-di-GMP pool generated by module I in a positive feedback loop. Production of c-di-GMP contributes to but is not essential for MlrA activation. The sequence is that of Diguanylate cyclase DgcM from Escherichia coli (strain K12).